Consider the following 238-residue polypeptide: Green fluorescent protein (238 aa).

Positions 65–67 form a cross-link, 5-imidazolinone (Ser-Gly); that stretch reads SYG. Tyr-66 carries the (Z)-2,3-didehydrotyrosine modification.

The protein belongs to the GFP family. As to quaternary structure, monomer. Post-translationally, contains a chromophore consisting of modified amino acid residues. The chromophore is formed by autocatalytic backbone condensation between Ser-65 and Gly-67, and oxidation of Tyr-66 to didehydrotyrosine. Maturation of the chromophore requires nothing other than molecular oxygen. Photocytes.

Functionally, energy-transfer acceptor. Its role is to transduce the blue chemiluminescence of the protein aequorin into green fluorescent light by energy transfer. Fluoresces in vivo upon receiving energy from the Ca(2+)-activated photoprotein aequorin. In Aequorea victoria (Water jellyfish), this protein is Green fluorescent protein (GFP).